Here is a 181-residue protein sequence, read N- to C-terminus: Adenylate kinase (181 aa).

G10–T15 provides a ligand contact to ATP. An NMP region spans residues S30–V59. AMP contacts are provided by residues T31, R36, D57 to V59, G85 to R88, and Q92. The tract at residues G126–D132 is LID. ATP is bound at residue R127. AMP is bound by residues R129 and R140. ATP is bound at residue G166.

The protein belongs to the adenylate kinase family. As to quaternary structure, monomer.

It localises to the cytoplasm. The enzyme catalyses AMP + ATP = 2 ADP. It functions in the pathway purine metabolism; AMP biosynthesis via salvage pathway; AMP from ADP: step 1/1. Its function is as follows. Catalyzes the reversible transfer of the terminal phosphate group between ATP and AMP. Plays an important role in cellular energy homeostasis and in adenine nucleotide metabolism. The protein is Adenylate kinase of Mycolicibacterium smegmatis (strain ATCC 700084 / mc(2)155) (Mycobacterium smegmatis).